Consider the following 164-residue polypeptide: Peptide deformylase (164 aa).

Fe cation is bound by residues Cys-87 and His-129. The active site involves Glu-130. Fe cation is bound at residue His-133.

The protein belongs to the polypeptide deformylase family. Fe(2+) is required as a cofactor.

It catalyses the reaction N-terminal N-formyl-L-methionyl-[peptide] + H2O = N-terminal L-methionyl-[peptide] + formate. In terms of biological role, removes the formyl group from the N-terminal Met of newly synthesized proteins. Requires at least a dipeptide for an efficient rate of reaction. N-terminal L-methionine is a prerequisite for activity but the enzyme has broad specificity at other positions. In Thermotoga maritima (strain ATCC 43589 / DSM 3109 / JCM 10099 / NBRC 100826 / MSB8), this protein is Peptide deformylase.